The following is a 192-amino-acid chain: dTTP/UTP pyrophosphatase (192 aa).

The Proton acceptor role is filled by D71.

The protein belongs to the Maf family. YhdE subfamily. Requires a divalent metal cation as cofactor.

The protein resides in the cytoplasm. It catalyses the reaction dTTP + H2O = dTMP + diphosphate + H(+). The enzyme catalyses UTP + H2O = UMP + diphosphate + H(+). Its function is as follows. Nucleoside triphosphate pyrophosphatase that hydrolyzes dTTP and UTP. May have a dual role in cell division arrest and in preventing the incorporation of modified nucleotides into cellular nucleic acids. The sequence is that of dTTP/UTP pyrophosphatase from Clostridium tetani (strain Massachusetts / E88).